The sequence spans 1151 residues: Sterol regulatory element-binding protein 1 (1151 aa).

The tract at residues 1-59 is transcriptional activation (acidic); it reads MDEPPFTEAALEQALAEPCELDAALLTDIEDMLQLINNQDSDFPGLFDAPYAGVAGGTD. The Cytoplasmic segment spans residues 1-487; that stretch reads MDEPPFTEAA…HGRGMLDRSR (487 aa). Residues 27–35 carry the 9aaTAD motif; sequence TDIEDMLQL. Disordered regions lie at residues 39-125 and 164-184; these read QDSD…IKEE and GYPSPPGSFSSATPPGSTSQT. The segment covering 57 to 69 has biased composition (low complexity); it reads GTDPTSPDASSPG. Positions 91–105 are enriched in pro residues; sequence TPPPPPVSPTQPAPT. Residues Ser98 and Ser117 each carry the phosphoserine modification. A compositionally biased stretch (polar residues) spans 170-184; the sequence is GSFSSATPPGSTSQT. The interaction with LMNA stretch occupies residues 234 to 497; sequence QQVPVLLQPH…LALCVLVFLC (264 aa). Residues 324–374 form the bHLH domain; that stretch reads EKRTAHNAIEKRYRSSINDKIIELKDLVVGTEAKLNKSAVLRKAIDYIRFL. 2 positions are modified to phosphoserine; by SIK1: Ser338 and Ser339. A leucine-zipper region spans residues 374–396; that stretch reads LQQSNQKLKQENLSLRTAAHKSK. Ser397 is subject to Phosphoserine; by AMPK. The tract at residues 399 to 479 is disordered; sequence KDLVSCSSGG…KPEQLPAPHG (81 aa). Ser403 is modified (phosphoserine; by SIK1). Residues 431 to 448 show a composition bias toward low complexity; that stretch reads DAGSPSQSSPLSLGSRGS. Residue Ser457 is modified to Phosphoserine. Residues 488 to 508 traverse the membrane as a helical segment; the sequence is LALCVLVFLCLSCNPLASLMG. Residues 509-547 lie on the Lumenal side of the membrane; the sequence is SWALPGPSDATSAYHGPWRSVLGAEGRDGPGWVLWLLPP. The chain crosses the membrane as a helical span at residues 548–568; the sequence is LVWLTNGLLVLLFLALLFVYG. The Cytoplasmic segment spans residues 569 to 1151; the sequence is EPVTRPHSDP…LGGGTTVTSS (583 aa). The interval 987-1006 is disordered; sequence RQKPPPPSQASQGSSSGAQA. Positions 995 to 1006 are enriched in low complexity; the sequence is QASQGSSSGAQA. At Ser1060 the chain carries Phosphoserine.

Belongs to the SREBP family. In terms of assembly, efficient DNA binding of the soluble transcription factor fragment requires dimerization with another bHLH protein. Interacts with CEBPA, the interaction produces a transcriptional synergy. Interacts with LMNA. As to quaternary structure, forms a tight complex with SCAP, the SCAP-SREBP complex, in the endoplasmic reticulum membrane and the Golgi apparatus. Interacts with PAQR3; the interaction anchors the SCAP-SREBP complex to the Golgi apparatus in low cholesterol conditions. In terms of processing, processed in the Golgi apparatus, releasing the protein from the membrane. At low cholesterol the SCAP-SREBP complex is recruited into COPII vesicles for export from the endoplasmic reticulum. In the Golgi, complex SREBPs are cleaved sequentially by site-1 (MBTPS1, S1P) and site-2 (MBTPS2, S2P) proteases. The first cleavage by site-1 protease occurs within the luminal loop, the second cleavage by site-2 protease occurs within the first transmembrane domain, releasing the transcription factor from the Golgi membrane. Phosphorylated by AMPK, leading to suppress protein processing and nuclear translocation, and repress target gene expression. Phosphorylation at Ser-403 by SIK1 represses activity possibly by inhibiting DNA-binding. Post-translationally, SCAP-free SREBF1 is ubiquitinated by the BCR(ARMC5) complex, leading to its degradation. In terms of processing, ubiquitinated; the nuclear form has a rapid turnover and is rapidly ubiquitinated and degraded by the proteasome in the nucleus.

The protein resides in the endoplasmic reticulum membrane. The protein localises to the golgi apparatus membrane. Its subcellular location is the cytoplasmic vesicle. It localises to the COPII-coated vesicle membrane. It is found in the nucleus. Its activity is regulated as follows. Activation by cleavage is down-regulated upon activation of SIRT3-dependent PRKAA1/AMPK-alpha signaling cascade which leads to inhibition of ATP-consuming lipogenesis to restore cellular energy balance. Its function is as follows. Precursor of the transcription factor form (Processed sterol regulatory element-binding protein 1), which is embedded in the endoplasmic reticulum membrane. Low sterol concentrations promote processing of this form, releasing the transcription factor form that translocates into the nucleus and activates transcription of genes involved in cholesterol biosynthesis and lipid homeostasis. Key transcription factor that regulates expression of genes involved in cholesterol biosynthesis and lipid homeostasis. Binds to the sterol regulatory element 1 (SRE-1) (5'-ATCACCCCAC-3'). Has dual sequence specificity binding to both an E-box motif (5'-ATCACGTGA-3') and to SRE-1 (5'-ATCACCCCAC-3'). Regulates the promoters of genes involved in cholesterol biosynthesis and the LDL receptor (LDLR) pathway of sterol regulation. This chain is Sterol regulatory element-binding protein 1 (SREBF1), found in Sus scrofa (Pig).